A 352-amino-acid chain; its full sequence is Pyrimidine monooxygenase RutA (352 aa).

Residues 49 to 50, asparagine 115, glutamate 124, 140 to 141, and serine 189 contribute to the FMN site; these read IK and RY.

This sequence belongs to the NtaA/SnaA/DszA monooxygenase family. RutA subfamily.

It catalyses the reaction uracil + FMNH2 + NADH + O2 = (Z)-3-ureidoacrylate + FMN + NAD(+) + H2O + H(+). The catalysed reaction is thymine + FMNH2 + NADH + O2 = (Z)-2-methylureidoacrylate + FMN + NAD(+) + H2O + H(+). Its function is as follows. Catalyzes the pyrimidine ring opening between N-3 and C-4 by an unusual flavin hydroperoxide-catalyzed mechanism, adding oxygen atoms in the process to yield ureidoacrylate peracid, that immediately reacts with FMN forming ureidoacrylate and FMN-N(5)-oxide. The FMN-N(5)-oxide reacts spontaneously with NADH to produce FMN. Requires the flavin reductase RutF to regenerate FMN in vivo. The polypeptide is Pyrimidine monooxygenase RutA (Caulobacter segnis (strain ATCC 21756 / DSM 7131 / JCM 7823 / NBRC 15250 / LMG 17158 / TK0059) (Mycoplana segnis)).